A 507-amino-acid chain; its full sequence is ATP synthase subunit alpha, chloroplastic (507 aa).

An ATP-binding site is contributed by 170–177 (GDRQTGKT).

It belongs to the ATPase alpha/beta chains family. F-type ATPases have 2 components, CF(1) - the catalytic core - and CF(0) - the membrane proton channel. CF(1) has five subunits: alpha(3), beta(3), gamma(1), delta(1), epsilon(1). CF(0) has four main subunits: a, b, b' and c.

It localises to the plastid. The protein resides in the chloroplast thylakoid membrane. It carries out the reaction ATP + H2O + 4 H(+)(in) = ADP + phosphate + 5 H(+)(out). In terms of biological role, produces ATP from ADP in the presence of a proton gradient across the membrane. The alpha chain is a regulatory subunit. This Spinacia oleracea (Spinach) protein is ATP synthase subunit alpha, chloroplastic.